The following is a 99-amino-acid chain: Malonate decarboxylase acyl carrier protein (99 aa).

S25 bears the O-(phosphoribosyl dephospho-coenzyme A)serine mark.

This sequence belongs to the MdcC family. Covalently binds the prosthetic group of malonate decarboxylase.

The protein localises to the cytoplasm. Its function is as follows. Subunit of malonate decarboxylase, it is an acyl carrier protein to which acetyl and malonyl thioester residues are bound via a 2'-(5''-phosphoribosyl)-3'-dephospho-CoA prosthetic group and turn over during the catalytic mechanism. The polypeptide is Malonate decarboxylase acyl carrier protein (Pseudomonas putida (strain W619)).